The following is a 360-amino-acid chain: COP9 signalosome complex subunit 5 (360 aa).

In terms of domain architecture, MPN spans 60–197; sequence AKISALALLK…IGAFRTYPKD (138 aa). Positions 143, 145, and 156 each coordinate Zn(2+). The short motif at 143–156 is the JAMM motif element; the sequence is HSHPGYGCWLSGID. Disordered stretches follow at residues 293-315 and 341-360; these read LMPS…RDSS and SNKA…MVEA. The segment covering 341 to 350 has biased composition (polar residues); it reads SNKASTSAPD.

The protein belongs to the peptidase M67A family. CSN5 subfamily. In terms of assembly, component of the CSN complex, probably composed of CSN1, CSN2, CSN3, CSN4, CSN5, CSN6, CSN7 and CSN8. Interacts with MCM2.

Its function is as follows. Probable protease subunit of the COP9 signalosome complex (CSN), a complex involved in various cellular and developmental processes such as photomorphogenesis and response to hormones. The CSN complex is an essential regulator of the ubiquitin (Ubl) conjugation pathway by mediating the deneddylation of the cullin subunits of SCF-type E3 ligase complexes, leading to decrease the Ubl ligase activity of SCF. Involved in early response to iron deficiency. The sequence is that of COP9 signalosome complex subunit 5 from Oryza sativa subsp. japonica (Rice).